The sequence spans 242 residues: Biosynthetic peptidoglycan transglycosylase (242 aa).

The helical transmembrane segment at 19-39 (ILAALAVFWGGGIALFSVVPV) threads the bilayer.

The protein belongs to the glycosyltransferase 51 family.

It localises to the cell inner membrane. The catalysed reaction is [GlcNAc-(1-&gt;4)-Mur2Ac(oyl-L-Ala-gamma-D-Glu-L-Lys-D-Ala-D-Ala)](n)-di-trans,octa-cis-undecaprenyl diphosphate + beta-D-GlcNAc-(1-&gt;4)-Mur2Ac(oyl-L-Ala-gamma-D-Glu-L-Lys-D-Ala-D-Ala)-di-trans,octa-cis-undecaprenyl diphosphate = [GlcNAc-(1-&gt;4)-Mur2Ac(oyl-L-Ala-gamma-D-Glu-L-Lys-D-Ala-D-Ala)](n+1)-di-trans,octa-cis-undecaprenyl diphosphate + di-trans,octa-cis-undecaprenyl diphosphate + H(+). It functions in the pathway cell wall biogenesis; peptidoglycan biosynthesis. Its function is as follows. Peptidoglycan polymerase that catalyzes glycan chain elongation from lipid-linked precursors. The protein is Biosynthetic peptidoglycan transglycosylase of Salmonella typhi.